The primary structure comprises 107 residues: Phosphoribosyl-ATP pyrophosphatase 1 (107 aa).

This sequence belongs to the PRA-PH family.

It localises to the cytoplasm. The enzyme catalyses 1-(5-phospho-beta-D-ribosyl)-ATP + H2O = 1-(5-phospho-beta-D-ribosyl)-5'-AMP + diphosphate + H(+). It functions in the pathway amino-acid biosynthesis; L-histidine biosynthesis; L-histidine from 5-phospho-alpha-D-ribose 1-diphosphate: step 2/9. The chain is Phosphoribosyl-ATP pyrophosphatase 1 (hisE1) from Rhodopseudomonas palustris (strain ATCC BAA-98 / CGA009).